The chain runs to 319 residues: Ribonucleoside-diphosphate reductase small chain (319 aa).

Positions 70, 101, and 104 each coordinate Fe cation. Residue Tyr108 is part of the active site. The Fe cation site is built by Glu163, Glu197, and His200. Positions 313 to 319 (FSLDVDF) are interaction with R1.

The protein belongs to the ribonucleoside diphosphate reductase small chain family. As to quaternary structure, interacts with RNR1/OPG080 subunit. Can interact with host RNR1 supunit. Fe cation is required as a cofactor.

It catalyses the reaction a 2'-deoxyribonucleoside 5'-diphosphate + [thioredoxin]-disulfide + H2O = a ribonucleoside 5'-diphosphate + [thioredoxin]-dithiol. Functionally, ribonucleoside-diphosphate reductase holoenzyme provides the precursors necessary for viral DNA synthesis. Allows virus growth in non-dividing cells. Catalyzes the biosynthesis of deoxyribonucleotides from the corresponding ribonucleotides. In Vaccinia virus (strain L-IVP) (VACV), this protein is Ribonucleoside-diphosphate reductase small chain (OPG048).